A 281-amino-acid chain; its full sequence is MINGSTKIVGLIGHPVEHSFSPPMHNAAFEELGLDYAYVPFNVCPENLKSAILGAKSLNIKGFNVTIPHKINVMKYLDKLDPIAKLIGAVNTIDFKEMKGYNTDGIGCIKAIGEVTSIKDKNIVVAGAGGASRAISFYLARENPQSIHILNRDINKAKSLAEDLKNSKLTDNVDFDSIDKIVGYVSDADILIDTTPVGMSPHVNDEAIVKAEDMHSDLVVNDIVYNPNETVLLSEAIKAGATPVYGIKMLLYQGAESFEIWTGEKAPVDVMEKTLRKTLDL.

Residues 19–21 (SFS) and T66 contribute to the shikimate site. The Proton acceptor role is filled by K70. Shikimate contacts are provided by N91 and D104. NADP(+)-binding positions include 127 to 131 (GAGGA) and I223. Y225 is a shikimate binding site. G246 provides a ligand contact to NADP(+).

Belongs to the shikimate dehydrogenase family. As to quaternary structure, homodimer.

The catalysed reaction is shikimate + NADP(+) = 3-dehydroshikimate + NADPH + H(+). The protein operates within metabolic intermediate biosynthesis; chorismate biosynthesis; chorismate from D-erythrose 4-phosphate and phosphoenolpyruvate: step 4/7. Functionally, involved in the biosynthesis of the chorismate, which leads to the biosynthesis of aromatic amino acids. Catalyzes the reversible NADPH linked reduction of 3-dehydroshikimate (DHSA) to yield shikimate (SA). In Methanobrevibacter smithii (strain ATCC 35061 / DSM 861 / OCM 144 / PS), this protein is Shikimate dehydrogenase (NADP(+)).